The primary structure comprises 424 residues: D-inositol 3-phosphate glycosyltransferase (424 aa).

His-9 is a 1D-myo-inositol 3-phosphate binding site. UDP-N-acetyl-alpha-D-glucosamine-binding positions include 15–16 (QP) and Gly-23. 1D-myo-inositol 3-phosphate contacts are provided by residues 20 to 25 (DSGGMN), Lys-78, Tyr-110, Thr-134, and Arg-154. 3 residues coordinate UDP-N-acetyl-alpha-D-glucosamine: Arg-231, Lys-236, and Arg-294. Residues Tyr-303, Arg-304, and Ala-306 each contribute to the Mg(2+) site. UDP-N-acetyl-alpha-D-glucosamine is bound by residues Glu-316 and Glu-324. Position 330 (Thr-330) interacts with Mg(2+).

It belongs to the glycosyltransferase group 1 family. MshA subfamily. As to quaternary structure, homodimer.

The enzyme catalyses 1D-myo-inositol 3-phosphate + UDP-N-acetyl-alpha-D-glucosamine = 1D-myo-inositol 2-acetamido-2-deoxy-alpha-D-glucopyranoside 3-phosphate + UDP + H(+). In terms of biological role, catalyzes the transfer of a N-acetyl-glucosamine moiety to 1D-myo-inositol 3-phosphate to produce 1D-myo-inositol 2-acetamido-2-deoxy-glucopyranoside 3-phosphate in the mycothiol biosynthesis pathway. This chain is D-inositol 3-phosphate glycosyltransferase, found in Corynebacterium efficiens (strain DSM 44549 / YS-314 / AJ 12310 / JCM 11189 / NBRC 100395).